A 308-amino-acid chain; its full sequence is Homoserine kinase (308 aa).

Residue 94 to 104 coordinates ATP; it reads PLARGLGSSAT.

The protein belongs to the GHMP kinase family. Homoserine kinase subfamily.

The protein localises to the cytoplasm. The enzyme catalyses L-homoserine + ATP = O-phospho-L-homoserine + ADP + H(+). It participates in amino-acid biosynthesis; L-threonine biosynthesis; L-threonine from L-aspartate: step 4/5. Its function is as follows. Catalyzes the ATP-dependent phosphorylation of L-homoserine to L-homoserine phosphate. The sequence is that of Homoserine kinase from Crocosphaera subtropica (strain ATCC 51142 / BH68) (Cyanothece sp. (strain ATCC 51142)).